A 352-amino-acid chain; its full sequence is MMYKIVSIPGDGIGPEVVAGALDVLNAVAKKHGFEVSVEEHLFGGASYDVHGSMLTDETLEACKNCDAVLLGAVGGYKWENLPHDKKPEAALLKIRKELGLFANLRPARVYDALVASSTLKTEVVQGTDFMVFRELTGGIYFGQPRGYDETRGWNTMVYERYEVERIARLAFEYAQKRGNAKVTSIDKANVLEVSQFWRNIVHEVHQDFPEIELVDMYVDNAAMQVVRNPKQFEVIVTSNLFGDILSDISGMITGSLGMLPSASIGSEHALYEPIHGSAPDIAGQNKANPIATIASVAMMFENSFNRPEVAADIYAAIEGALAAGFRTGDIAAAGEAISSTTEMTAAIVARI.

NAD(+) is bound at residue 76 to 89 (GYKWENLPHDKKPE). Positions 96, 106, 134, and 220 each coordinate substrate. The Mg(2+) site is built by Asp-220, Asp-244, and Asp-248. NAD(+) is bound at residue 277 to 289 (GSAPDIAGQNKAN).

Belongs to the isocitrate and isopropylmalate dehydrogenases family. LeuB type 1 subfamily. In terms of assembly, homodimer. Requires Mg(2+) as cofactor. Mn(2+) serves as cofactor.

It localises to the cytoplasm. The enzyme catalyses (2R,3S)-3-isopropylmalate + NAD(+) = 4-methyl-2-oxopentanoate + CO2 + NADH. Its pathway is amino-acid biosynthesis; L-leucine biosynthesis; L-leucine from 3-methyl-2-oxobutanoate: step 3/4. Catalyzes the oxidation of 3-carboxy-2-hydroxy-4-methylpentanoate (3-isopropylmalate) to 3-carboxy-4-methyl-2-oxopentanoate. The product decarboxylates to 4-methyl-2 oxopentanoate. The polypeptide is 3-isopropylmalate dehydrogenase (Chlorobaculum tepidum (strain ATCC 49652 / DSM 12025 / NBRC 103806 / TLS) (Chlorobium tepidum)).